We begin with the raw amino-acid sequence, 134 residues long: Small ribosomal subunit protein uS8 (134 aa).

It belongs to the universal ribosomal protein uS8 family. As to quaternary structure, part of the 30S ribosomal subunit. Contacts proteins S5 and S12.

Its function is as follows. One of the primary rRNA binding proteins, it binds directly to 16S rRNA central domain where it helps coordinate assembly of the platform of the 30S subunit. This is Small ribosomal subunit protein uS8 from Sphingopyxis alaskensis (strain DSM 13593 / LMG 18877 / RB2256) (Sphingomonas alaskensis).